Reading from the N-terminus, the 1221-residue chain is DNA replication helicase (1221 aa).

A Nuclear localization signal motif is present at residues 692 to 701 (PKCKCYKKIK). 917–924 (GEPGSGKS) contributes to the ATP binding site. Positions 967–981 (INELKQCSESYFKKH) form a DNA-binding region, H-T-H motif.

Interacts with IE1 and LEF-3.

It is found in the host nucleus. It catalyses the reaction ATP + H2O = ADP + phosphate + H(+). Functionally, essential for initiation of viral DNA replication, it may contribute to other functions such as controlling the switch to the late phase and leading to the inhibition of host protein synthesis. Required for late and very late gene expression. The chain is DNA replication helicase (HELI) from Lepidoptera (butterflies and moths).